The chain runs to 70 residues: Large ribosomal subunit protein bL31 (70 aa).

Zn(2+)-binding residues include Cys-16, Cys-18, Cys-38, and Cys-41.

This sequence belongs to the bacterial ribosomal protein bL31 family. Type A subfamily. As to quaternary structure, part of the 50S ribosomal subunit. Zn(2+) serves as cofactor.

Its function is as follows. Binds the 23S rRNA. The chain is Large ribosomal subunit protein bL31 from Mycolicibacterium gilvum (strain PYR-GCK) (Mycobacterium gilvum (strain PYR-GCK)).